A 148-amino-acid chain; its full sequence is HTH-type transcriptional regulator SarZ (148 aa).

The HTH marR-type domain occupies 9–139 (SKQLCFLFYV…LVEDLQNFVT (131 aa)). The segment at residues 55–78 (IKKLGERVFLDSGTLTPLLKKLEK) is a DNA-binding region (H-T-H motif).

This sequence belongs to the SarZ family.

It localises to the cytoplasm. The polypeptide is HTH-type transcriptional regulator SarZ (sarZ) (Staphylococcus epidermidis (strain ATCC 35984 / DSM 28319 / BCRC 17069 / CCUG 31568 / BM 3577 / RP62A)).